A 194-amino-acid polypeptide reads, in one-letter code: dITP/XTP pyrophosphatase (194 aa).

Residue 8 to 13 (TNNPHK) participates in substrate binding. The active-site Proton acceptor is the Asp-69. Asp-69 contacts Mg(2+). Substrate is bound by residues Thr-70, 150–153 (FGYD), Lys-173, and 178–179 (HR).

It belongs to the HAM1 NTPase family. As to quaternary structure, homodimer. The cofactor is Mg(2+).

The enzyme catalyses XTP + H2O = XMP + diphosphate + H(+). The catalysed reaction is dITP + H2O = dIMP + diphosphate + H(+). It catalyses the reaction ITP + H2O = IMP + diphosphate + H(+). Its function is as follows. Pyrophosphatase that catalyzes the hydrolysis of nucleoside triphosphates to their monophosphate derivatives, with a high preference for the non-canonical purine nucleotides XTP (xanthosine triphosphate), dITP (deoxyinosine triphosphate) and ITP. Seems to function as a house-cleaning enzyme that removes non-canonical purine nucleotides from the nucleotide pool, thus preventing their incorporation into DNA/RNA and avoiding chromosomal lesions. The sequence is that of dITP/XTP pyrophosphatase from Porphyromonas gingivalis (strain ATCC BAA-308 / W83).